Consider the following 256-residue polypeptide: Glutamate racemase (256 aa).

Substrate is bound by residues D5–S6 and Y37–G38. C69 serves as the catalytic Proton donor/acceptor. N70 to T71 contacts substrate. The active-site Proton donor/acceptor is the C181. Substrate is bound at residue T182 to H183.

It belongs to the aspartate/glutamate racemases family.

The enzyme catalyses L-glutamate = D-glutamate. Its pathway is cell wall biogenesis; peptidoglycan biosynthesis. Provides the (R)-glutamate required for cell wall biosynthesis. The sequence is that of Glutamate racemase from Buchnera aphidicola subsp. Schizaphis graminum (strain Sg).